The following is a 1885-amino-acid chain: Chitin synthase 5 (1885 aa).

One can recognise a Myosin motor domain in the interval 1-789 (MATRGNVPAH…SIALTGSQAA (789 aa)). ATP is bound at residue 99 to 106 (GESGSGKT). N-linked (GlcNAc...) asparagine glycosylation is found at N219 and N429. Positions 601 to 649 (KPLRMPSVSRKKHDQLRRMASRRADRSPAPQEEEPLPGTEEAKVRRTKP) are disordered. Residues 609-621 (SRKKHDQLRRMAS) are compositionally biased toward basic residues. The tract at residues 666–690 (LDNITKSLTAPNVNNYFVFCLKPND) is actin-binding. A glycan (N-linked (GlcNAc...) asparagine) is linked at N668. The interval 794 to 817 (GDIGSPSRPDTPGHNPFSDSKARL) is disordered. Transmembrane regions (helical) follow at residues 894–914 (WLAI…KWIG) and 929–949 (FAIN…IIVF). Residues 957-1016 (QNVYSAAELSAHDGKGKHSAYVAIRGQVFDLGAFMPNHYPKIIPQSSLKKYAGVDATGLF) enclose the Cytochrome b5 heme-binding domain. N1043 and N1068 each carry an N-linked (GlcNAc...) asparagine glycan. The helical transmembrane segment at 1205–1225 (ILLAVSILLCSVIGFKFFAAL) threads the bilayer. Residues N1462 and N1568 are each glycosylated (N-linked (GlcNAc...) asparagine). Helical transmembrane passes span 1599 to 1619 (LLST…IVLL), 1626 to 1646 (VPLT…IIFI), and 1653 to 1673 (MIGW…GLPL). N1759 and N1790 each carry an N-linked (GlcNAc...) asparagine glycan. The 56-residue stretch at 1827–1882 (LPTDDMLLNEIRDILRTADLMTVTKKGIKQELERRFNVNLDMKRAYIGSATEAILS) folds into the DEK-C domain.

In the N-terminal section; belongs to the TRAFAC class myosin-kinesin ATPase superfamily. Myosin family. This sequence in the C-terminal section; belongs to the chitin synthase family. Class V subfamily. Post-translationally, maximal activity requires trypsin activation, suggesting a zymogenic nature.

It localises to the cell membrane. The protein localises to the membrane. It catalyses the reaction [(1-&gt;4)-N-acetyl-beta-D-glucosaminyl](n) + UDP-N-acetyl-alpha-D-glucosamine = [(1-&gt;4)-N-acetyl-beta-D-glucosaminyl](n+1) + UDP + H(+). Functionally, polymerizes chitin, a structural polymer of the cell wall and septum, by transferring the sugar moiety of UDP-GlcNAc to the non-reducing end of the growing chitin polymer. CHS5 is required for the sustained growth at 37 degrees Celsius and is of critical importance for virulence. Especially important at infection temperatures for maintaining the cell wall integrity of developing yeast buds, elongating tips of hyphae, and random sites of expansion in sclerotic forms. The protein is Chitin synthase 5 of Exophiala dermatitidis (Black yeast-like fungus).